The sequence spans 1121 residues: uncharacterized protein (1121 aa).

Positions 179-198 (GPGECQSVHNQSSGSGSNSY) are disordered. N-linked (GlcNAc...) asparagine; by host glycosylation is found at N188, N325, N351, N449, N561, and N615. 2 disordered regions span residues 649–684 (KRIHSQNENPEDGQVREGGCSDVRNEPPRKSARIHN) and 701–734 (STRQDASGGSSSGTKNEYYDDESELTGLSDTDSD). Residues 701 to 715 (STRQDASGGSSSGTK) show a composition bias toward polar residues. 4 N-linked (GlcNAc...) asparagine; by host glycosylation sites follow: N838, N911, N914, and N980.

This sequence belongs to the herpesviridae US22 family.

This is an uncharacterized protein from Homo sapiens (Human).